We begin with the raw amino-acid sequence, 495 residues long: Myocyte-specific enhancer factor 2A (495 aa).

The MADS-box domain maps to 3–57; it reads RKKIQITRIMDERNRQVTFTKRKFGLMKKAYELSVLCDCEIALIIFNSSNKLFQY. A DNA-binding region (mef2-type) is located at residues 58–86; sequence ASTDMDKVLLKYTEYNEPHESRTNSDIVE. Ser-59 is modified (phosphoserine; by CK2). The residue at position 98 (Ser-98) is a Phosphoserine. Residues 175-225 form a disordered region; it reads AESSMLSPPPATLHRNVSPGAPQRPPSTGSAGGMLSTTDLTVPNGAGNGPV. Ser-235 is subject to Phosphoserine. The disordered stretch occupies residues 242-271; the sequence is TGANSVGKVMPTKSPPPPGGGSVGMNSRKP. N6-acetyllysine is present on Lys-249. Position 255 is a phosphoserine (Ser-255). The tract at residues 266 to 283 is required for interaction with MAPKs; the sequence is MNSRKPDLRVVIPPSSKG. 2 positions are modified to phosphothreonine; by MAPK7 and MAPK14: Thr-304 and Thr-311. Ser-347 carries the phosphoserine; by MAPK7 modification. The segment covering 382 to 394 has biased composition (polar residues); the sequence is SNLSINTNQNINI. A disordered region spans residues 382–495; it reads SNLSINTNQN…KRMRMDTWVT (114 aa). Position 395 is an N6-acetyllysine; alternate (Lys-395). Lys-395 is covalently cross-linked (Glycyl lysine isopeptide (Lys-Gly) (interchain with G-Cter in SUMO); alternate). Ser-400 is subject to Phosphoserine; by CDK5. A Phosphothreonine modification is found at Thr-407. Residues 421–433 show a composition bias toward pro residues; that stretch reads QQPPPQPPQPQPQ. Ser-441 is modified (phosphoserine). A compositionally biased stretch (low complexity) spans 441 to 454; sequence SPVDSLSSSSSSYD. Composition is skewed to basic and acidic residues over residues 455–465 and 476–495; these read GSDREDPRGDF and NAED…TWVT.

Binds DNA as a homo- or heterodimer. Dimerizes with MEF2D. Interacts with HDAC7. Interacts with PIAS1; the interaction enhances sumoylation. Interacts with HDAC4, HDAC9 and SLC2A4RG. Interacts (via the N-terminal) with MAPK7; the interaction results in the phosphorylation and transcriptional activity of MEF2A. Post-translationally, constitutive phosphorylation on Ser-400 promotes Lys-395 sumoylation thus preventing acetylation at this site. Dephosphorylation on Ser-400 by PPP3CA upon neuron depolarization promotes a switch from sumoylation to acetylation on residue Lys-395 leading to inhibition of dendrite claw differentiation. Phosphorylation on Thr-304 and Thr-311 are the main sites involved in p38 MAPK signaling and activate transcription. Phosphorylated on these sites by MAPK14/p38alpha and MAPK11/p38beta, but not by MAPK13/p38delta nor by MAPK12/p38gamma. Phosphorylation on Ser-400 by CDK5 induced by neurotoxicity inhibits MEF2A transcriptional activation leading to apoptosis of cortical neurons. Phosphorylation on Thr-304, Thr-311 and Ser-347 can be induced by EGF. In terms of processing, sumoylation on Lys-395 is enhanced by PIAS1 and represses transcriptional activity. Phosphorylation on Ser-400 is required for sumoylation. Has no effect on nuclear location nor on DNA binding. Sumoylated with SUMO1 and, to a lesser extent with SUMO2 and SUMO3. PIASx facilitates sumoylation in postsynaptic dendrites in the cerebellar cortex and promotes their morphogenesis. Acetylation on Lys-395 activates transcriptional activity. Acetylated by p300 on several sites in diffentiating myocytes. Acetylation on Lys-4 increases DNA binding and transactivation. Hyperacetylation by p300 leads to enhanced cardiac myocyte growth and heart failure. Post-translationally, proteolytically cleaved in cerebellar granule neurons on several sites by caspase 3 and caspase 7 following neurotoxicity. Preferentially cleaves the CDK5-mediated hyperphosphorylated form which leads to neuron apoptosis and transcriptional inactivation.

The protein localises to the nucleus. In terms of biological role, transcriptional activator which binds specifically to the MEF2 element, 5'-YTA[AT](4)TAR-3', found in numerous muscle-specific genes. Also involved in the activation of numerous growth factor- and stress-induced genes. Mediates cellular functions not only in skeletal and cardiac muscle development, but also in neuronal differentiation and survival. Plays diverse roles in the control of cell growth, survival and apoptosis via p38 MAPK signaling in muscle-specific and/or growth factor-related transcription. In cerebellar granule neurons, phosphorylated and sumoylated MEF2A represses transcription of NUR77 promoting synaptic differentiation. Associates with chromatin to the ZNF16 promoter. The sequence is that of Myocyte-specific enhancer factor 2A (Mef2a) from Rattus norvegicus (Rat).